The primary structure comprises 488 residues: Protein kinase C and casein kinase substrate in neurons 2 protein (488 aa).

An F-BAR domain is found at 11–282 (VEVSSDSFWE…SIKAADAVED (272 aa)). The stretch at 25–274 (KRTVKRIDDG…GIYRELEQSI (250 aa)) forms a coiled coil. Lys53 is subject to N6-acetyllysine. The span at 163–176 (CKEEKLAVSREANS) shows a compositional bias: basic and acidic residues. The disordered stretch occupies residues 163-183 (CKEEKLAVSREANSKADPSLN). Phosphoserine is present on Ser273. Ser315 is subject to Phosphoserine; by PKC. Positions 316 to 429 (RREKKKAADG…PFDEDTTSGT (114 aa)) are disordered. Positions 329 to 364 (TGINQTGDQSGQNKPSSNLSVPSNPAQSTQLQSSYN) are enriched in polar residues. An NPF1 motif is present at residues 364-366 (NPF). The residue at position 375 (Ser375) is a Phosphoserine; by IKKB. The span at 386–396 (NVSSYEKTQNY) shows a compositional bias: polar residues. Ser401 is modified (phosphoserine). A compositionally biased stretch (polar residues) spans 406–418 (NNPFSSTDANGDS). The NPF2 signature appears at 407–409 (NPF). The short motif at 419-421 (NPF) is the NPF3 element. The SH3 domain maps to 428–488 (GTEVRVRALY…YPANYVEAIQ (61 aa)). Ser448 carries the phosphoserine modification.

It belongs to the PACSIN family. Homodimer. May form heterooligomers with other PACSINs. Interacts (via NPF motifs) with EHD1 (via EH domain). Interacts with EHD3. Interacts (via the SH3 domain) with MICALL1. Interacts with RAC1. Interacts (via SH3 domain) with DNM1, SYN1, SYNJ1 and WASL. Interacts with CAV1. Interacts with TRPV4. Forms a complex with EHD4 and MICALL1; the complex controls CDH5 trafficking and coordinates angiogenesis. Phosphorylated by casein kinase 2 (CK2) and protein kinase C (PKC). Phosphorylation by PKC probably decreases the membrane binding and tubulation capacities of PACSIN2, thereby modulating the lifetime of caveolae. In terms of tissue distribution, widely expressed (at protein level). Isoforms 1/3 are predominantly expressed in heart and in PC-12 cells, a pheochromocytoma cell line (at protein level). Isoforms 2/4 are widely expressed with highest levels in muscle, testis and brain (at protein level).

The protein resides in the cytoplasm. Its subcellular location is the cytoskeleton. It localises to the cytoplasmic vesicle membrane. It is found in the cell projection. The protein localises to the ruffle membrane. The protein resides in the early endosome. Its subcellular location is the recycling endosome membrane. It localises to the cell membrane. It is found in the membrane. The protein localises to the caveola. The protein resides in the cell junction. Its subcellular location is the adherens junction. In terms of biological role, regulates the morphogenesis and endocytosis of caveolae. Lipid-binding protein that is able to promote the tubulation of the phosphatidic acid-containing membranes it preferentially binds. Plays a role in intracellular vesicle-mediated transport. Involved in the endocytosis of cell-surface receptors like the EGF receptor, contributing to its internalization in the absence of EGF stimulus. Facilitates endothelial front-rear polarity during migration by recruiting EHD4 and MICALL1 to asymmetric adherens junctions between leader and follower cells. The polypeptide is Protein kinase C and casein kinase substrate in neurons 2 protein (Pacsin2) (Rattus norvegicus (Rat)).